A 222-amino-acid polypeptide reads, in one-letter code: Cytidylate kinase (222 aa).

Residue 11–19 participates in ATP binding; that stretch reads GPTASGKGT.

It belongs to the cytidylate kinase family. Type 1 subfamily.

It localises to the cytoplasm. It catalyses the reaction CMP + ATP = CDP + ADP. The catalysed reaction is dCMP + ATP = dCDP + ADP. The protein is Cytidylate kinase of Cupriavidus necator (strain ATCC 17699 / DSM 428 / KCTC 22496 / NCIMB 10442 / H16 / Stanier 337) (Ralstonia eutropha).